The primary structure comprises 999 residues: Probable beta-galactosidase C (999 aa).

The first 21 residues, 1–21, serve as a signal peptide directing secretion; it reads MFFFRFLTTVLLLFNAKLLVA. N25 is a glycosylation site (N-linked (GlcNAc...) asparagine). 4 residues coordinate substrate: Y80, N125, E127, and N185. E186 (proton donor) is an active-site residue. N195 is a glycosylation site (N-linked (GlcNAc...) asparagine). Y249 contacts substrate. C255 and C302 are disulfide-bonded. N274 is a glycosylation site (N-linked (GlcNAc...) asparagine). Residue E285 is the Nucleophile of the active site. Position 351 (Y351) interacts with substrate. N-linked (GlcNAc...) asparagine glycosylation is found at N389, N441, N512, N519, N600, N675, N713, N757, N808, and N897.

It belongs to the glycosyl hydrolase 35 family.

It localises to the secreted. It catalyses the reaction Hydrolysis of terminal non-reducing beta-D-galactose residues in beta-D-galactosides.. Cleaves beta-linked terminal galactosyl residues from gangliosides, glycoproteins, and glycosaminoglycans. The sequence is that of Probable beta-galactosidase C (lacC) from Talaromyces marneffei (strain ATCC 18224 / CBS 334.59 / QM 7333) (Penicillium marneffei).